Consider the following 524-residue polypeptide: Probable serine/threonine-protein kinase WNK10 (524 aa).

In terms of domain architecture, Protein kinase spans 16 to 273 (IRYNDVLGRG…ALELLKDQLL (258 aa)). ATP-binding positions include 96–99 (TELF) and Lys-146. Catalysis depends on Asp-163, which acts as the Proton acceptor. At Ser-477 the chain carries Phosphoserine. A coiled-coil region spans residues 480 to 523 (SNKQSEDLKTELNVIESQYNQSCQRLLRMKEEAIEKAKRKWMKL).

The protein belongs to the protein kinase superfamily. Ser/Thr protein kinase family. WNK subfamily.

It catalyses the reaction L-seryl-[protein] + ATP = O-phospho-L-seryl-[protein] + ADP + H(+). It carries out the reaction L-threonyl-[protein] + ATP = O-phospho-L-threonyl-[protein] + ADP + H(+). Functionally, may regulate flowering time by modulating the photoperiod pathway. This is Probable serine/threonine-protein kinase WNK10 (WNK10) from Arabidopsis thaliana (Mouse-ear cress).